A 100-amino-acid chain; its full sequence is Small ribosomal subunit protein bS20 (100 aa).

Positions 1–22 (MASGKPKKKNPRLASGRKRARQ) are enriched in basic residues. Positions 1-26 (MASGKPKKKNPRLASGRKRARQGLKL) are disordered.

Belongs to the bacterial ribosomal protein bS20 family.

Functionally, binds directly to 16S ribosomal RNA. This chain is Small ribosomal subunit protein bS20, found in Acidovorax ebreus (strain TPSY) (Diaphorobacter sp. (strain TPSY)).